The primary structure comprises 228 residues: Ribulose-phosphate 3-epimerase (228 aa).

Residue serine 9 coordinates substrate. A divalent metal cation contacts are provided by histidine 34, aspartate 36, and histidine 70. Aspartate 36 acts as the Proton acceptor in catalysis. Residues histidine 70, 146 to 149 (GKGG), 175 to 177 (DGG), and 197 to 198 (GT) each bind substrate. A divalent metal cation is bound at residue aspartate 175. Catalysis depends on aspartate 175, which acts as the Proton donor.

Belongs to the ribulose-phosphate 3-epimerase family. Co(2+) serves as cofactor. Requires Fe(2+) as cofactor. The cofactor is Mn(2+). It depends on Zn(2+) as a cofactor.

It catalyses the reaction D-ribulose 5-phosphate = D-xylulose 5-phosphate. It participates in carbohydrate degradation; pentose phosphate pathway; D-xylulose 5-phosphate from D-ribulose 5-phosphate (non-oxidative stage): step 1/1. Its function is as follows. Catalyzes the reversible epimerization of D-ribulose 5-phosphate to D-xylulose 5-phosphate. This is Ribulose-phosphate 3-epimerase from Schizosaccharomyces pombe (strain 972 / ATCC 24843) (Fission yeast).